Reading from the N-terminus, the 18562-residue chain is Titin homolog (18562 aa).

The Ig-like 1 domain occupies 90-176 (PKFIQVIKAY…GVSTSYGYIT (87 aa)). Residues 384-404 (RFHPQPPKPPRAGTSRRFLPE) form a disordered region. 4 Ig-like domains span residues 406 to 493 (PKFV…TQVT), 821 to 913 (PKIV…AFIN), 943 to 1038 (PKFI…LTIS), and 1135 to 1225 (PRFE…LTVD). A disulfide bond links Cys-842 and Cys-897. The disordered stretch occupies residues 1336–1360 (LPPVQKSMSVQEEKASSQRTPSPMN). The Ig-like 6 domain maps to 1679–1762 (PKFLRKLVNC…ASNVAGTTFS (84 aa)). Cys-1700 and Cys-1751 are oxidised to a cystine. 3 coiled-coil regions span residues 1766 to 1786 (LKLS…SEIK), 2011 to 2038 (QSLD…ERTS), and 2065 to 2085 (ISDQ…ALQE). The segment at 2155–2177 (RKGSDKDKRKATRIKRVPSAHSA) is disordered. A compositionally biased stretch (basic residues) spans 2163-2172 (RKATRIKRVP). Residues 2205–2231 (LKQNEEAKEIQELFVKIEKEINTIAEL) are a coiled coil. Disordered regions lie at residues 2298 to 2459 (IIGI…TADA) and 2614 to 2637 (KSSL…EVTA). Low complexity predominate over residues 2309-2323 (RRPSSTPRGSTRSSN). Polar residues predominate over residues 2324–2341 (LTTSQDSQATTKMTVSSE). Positions 2606 to 2630 (LMQTLASEKSSLKAAEEDEKEGEEE) form a coiled coil. Positions 2621–2636 (EEDEKEGEEEGEEEVT) are enriched in acidic residues. Ig-like domains follow at residues 3095 to 3177 (KEVM…SGLY) and 3179 to 3264 (TERS…SFVS). Positions 3362–3692 (EVPKVAEPSE…NAEAQKVVDS (331 aa)) are disordered. Acidic residues predominate over residues 3655 to 3665 (SEEETPLEETN). 3 consecutive Ig-like domains span residues 3789–3878 (PVFT…CEIV), 3897–3985 (PHFV…CTID), and 4038–4125 (PPYF…CVLT). 2 disulfides stabilise this stretch: Cys-3919–Cys-3969 and Cys-4059–Cys-4109. Disordered stretches follow at residues 4553-4599 (QSRE…SAPT), 4634-4699 (TVEP…EIVE), 4750-4814 (GSTA…TSEV), 4826-4855 (PVPE…EVQP), 4912-4931 (STAA…VESK), 4950-4969 (PETS…PVES), 4989-5216 (PETS…EILE), 5267-5294 (GSTA…EVEP), 5306-5325 (PETS…SVES), 5345-5372 (PETS…EVEP), 5428-6101 (GSTA…VEPT), 6127-6157 (VQVP…EVQP), 6214-6900 (STAA…ETSE), and 6930-8453 (APVE…DDKL). Basic and acidic residues predominate over residues 4555–4577 (RELDNTERNFTVNKEKDESKKPS). PVET repeat units follow at residues 4599 to 4626 (TVEK…KDVP), 4627 to 4665 (VPET…KDVP), 4666 to 4704 (VPET…KDVT), 4755 to 4787 (PAQE…KDVP), 4788 to 4826 (VPET…KDVP), 4827 to 4865 (VPET…KDVT), 4917 to 4948 (AQEP…KDVP), 4949 to 4987 (VPET…KDVP), 4988 to 5026 (VPET…KDVP), 5027 to 5065 (VPET…KDVP), 5066 to 5104 (VPET…KDVP), 5105 to 5143 (VPET…KDVP), 5144 to 5182 (VPET…KVVP), 5183 to 5221 (VPET…KDVT), 5273 to 5304 (AQEP…KDVP), 5305 to 5343 (VPET…KDVP), 5344 to 5382 (VPET…KDVT), 5434 to 5465 (AQEP…KDVP), 5466 to 5504 (VPET…KDVP), 5505 to 5543 (VPET…KVVP), 5544 to 5582 (VPET…KDVP), 5583 to 5621 (VPET…KDVP), 5622 to 5660 (VPET…KDVS), 5661 to 5699 (VPET…KDVS), 5700 to 5738 (VPET…KDVP), 5739 to 5777 (VPET…KDVQ), 5778 to 5816 (VPET…KDVP), 5817 to 5855 (VPET…KDVP), 5856 to 5894 (VPET…KDVS), 5895 to 5933 (VPET…KDVP), 5934 to 5972 (VPET…KDVQ), 5973 to 6011 (VPET…KDVP), 6012 to 6050 (VPET…KDVQ), 6051 to 6089 (VPET…KDVS), 6090 to 6128 (VPET…KDVQ), 6129 to 6167 (VPET…KDVT), 6219 to 6250 (AHEP…KDVP), 6251 to 6289 (VPET…KDLP), 6290 to 6328 (VPET…KDVP), 6329 to 6367 (VPET…KDVP), 6368 to 6406 (VPET…KDVP), 6407 to 6445 (VPET…KDVS), 6446 to 6484 (VPET…KDVS), 6485 to 6523 (VPET…KDVP), 6524 to 6562 (VPET…KDVQ), 6563 to 6601 (VPET…KDVP), 6602 to 6640 (VPET…KDVP), 6641 to 6679 (VPET…KDVQ), 6680 to 6718 (VPET…KDVP), 6719 to 6757 (VPET…KDVA), 6758 to 6796 (VPET…KDVP), 6797 to 6835 (VPET…KDVP), 6836 to 6874 (VPET…KDVP), 6875 to 6913 (VPET…KDVP), 6914 to 6952 (VPEA…KDVP), and 6953 to 6991 (VPEA…KLKK). Composition is skewed to basic and acidic residues over residues 4638–4651 (TVEK…KETS) and 4677–4691 (TVEK…EKSE). Residues 4960-4969 (TVEKLKPVES) are compositionally biased toward basic and acidic residues. Over residues 5038–5051 (TVEKLKPVESKETS) the composition is skewed to basic and acidic residues. Composition is skewed to basic and acidic residues over residues 5116 to 5129 (TVEK…KETS) and 5155 to 5168 (TVEK…KETS). The stretch at 5212–5235 (AEILEQKDVTCEEEIKELLTEVEV) forms a coiled coil. A compositionally biased stretch (basic and acidic residues) spans 5316-5325 (TVEKLKSVES). Basic and acidic residues-rich tracts occupy residues 5477-5490 (TVEK…KETS) and 5516-5529 (TVEK…KETS). 6 stretches are compositionally biased toward basic and acidic residues: residues 6690 to 6704 (PTKE…KETS), 6729 to 6743 (PTKE…KETS), 6768 to 6782 (PTKE…KETS), 6807 to 6821 (PTKE…KETS), 6846 to 6860 (PTKE…KETS), and 6885 to 6899 (PTKE…KETS). Composition is skewed to basic and acidic residues over residues 6972–7606 (ESKE…DNFK), 7613–7630 (LQKE…DNFK), 7637–8062 (LQKE…DNFK), and 8069–8453 (LQKE…DDKL). Residues 6984 to 7812 (QADAKLKKEK…DKLKQETDAK (829 aa)) adopt a coiled-coil conformation. BLUE repeat units lie at residues 6992-6996 (EKDDK), 6997-7012 (HKQE…NDDK), 7013-7028 (LKQE…NDDK), 7029-7044 (LKQE…NDDK), 7045-7060 (LKQE…NDDK), 7061-7076 (LKQE…NDDK), 7077-7092 (LKQE…NDDK), 7093-7108 (LKQE…NDDK), 7109-7124 (LKQE…NDDK), 7125-7140 (LKQE…NDDK), 7141-7156 (LKQE…NDDK), 7157-7172 (LKQE…NDDK), 7173-7188 (LKQE…NDDK), 7189-7204 (LKQE…KHDK), 7205-7220 (LKQE…NDDK), 7221-7236 (LKQE…NDDK), 7237-7252 (LKQE…KDDK), 7253-7268 (LKQE…KDDK), 7269-7284 (LKQD…KDDK), 7285-7300 (LKQE…KDDK), 7301-7316 (LKHE…KDDK), 7317-7332 (LKQE…KDDR), 7333-7348 (LKKD…KDDK), 7349-7364 (LKQE…KDDK), 7365-7380 (LKHE…KDDK), 7381-7396 (LKQE…KDDK), 7397-7412 (LKQE…KDDK), 7413-7428 (LKQE…KDDK), 7429-7444 (LKQE…KDDK), 7445-7460 (LKQE…KDDK), 7461-7476 (LKQE…KDDK), 7477-7492 (LKQE…KDDK), 7493-7508 (LKQE…KDDK), 7509-7524 (LKQD…KDDK), 7525-7540 (LKQE…KDDK), 7541-7556 (LKHE…KDDK), 7557-7572 (LKQE…KDDK), 7573-7588 (LKQD…KDDK), 7589-7604 (LKHE…KDDN), 7605-7620 (FKQE…KDDK), 7621-7628 (LKQEKDDN), 7629-7644 (FKQE…KDDK), 7645-7652 (LKQEKDDK), 7653-7668 (LKQE…KDDK), 7669-7684 (LKQE…KDDK), 7685-7700 (LKQE…KDDK), 7701-7716 (LKQE…KDDK), 7717-7732 (LKQE…KDDK), 7733-7748 (LKQE…KDDK), 7749-7764 (LKQE…KDDK), 7765-7772 (LKQEKNDK), 7773-7788 (LKQE…KDDK), 7789-7804 (LKQE…KDDK), 7805-7820 (LKQE…KDDK), 7821-7836 (LKQE…KDDK), 7837-7852 (LKQE…KDDK), 7853-7868 (LKQE…KDNK), 7869-7884 (LKQE…KDNK), 7885-7900 (LKQE…KDDK), 7901-7916 (LKQE…KDDK), 7917-7932 (LKQE…KDDK), 7933-7948 (LKQE…KDDK), 7949-7964 (LKQE…KDDK), 7965-7980 (LKQE…KDDK), 7981-7996 (LKQE…KDDK), 7997-8012 (LKQE…KDDK), 8013-8028 (LKQE…KDDK), 8029-8044 (LKQE…KDDK), 8045-8060 (LKQE…KDDN), 8061-8076 (FKQE…KDDK), 8077-8084 (LKQEKDDK), 8085-8100 (LKQE…KDDK), 8101-8116 (LKQE…KDDK), 8117-8132 (LKQE…KDDK), 8133-8148 (LKQE…KDDK), 8149-8164 (LKQE…KDDK), 8165-8180 (LKQE…KDDK), 8181-8196 (LKQE…KDDK), 8197-8212 (LKQE…KDDK), 8213-8228 (LKQE…KDDK), 8229-8244 (LKQE…KDDK), 8245-8260 (LKQE…KDDK), 8261-8276 (LKQE…KDDK), 8277-8292 (LKQE…KDDK), 8293-8308 (LKQE…KDNK), 8309-8324 (LKQE…KDNK), 8325-8340 (LKQE…KDDK), 8341-8356 (LKQE…KDDK), 8357-8371 (LKQE…EKDD), 8373-8388 (LKQE…KDDK), 8389-8404 (LKQE…KDDK), 8405-8420 (LKQE…KDDK), 8421-8436 (LKQE…KDDK), 8437-8452 (LKQE…KDDK), 8453-8468 (LKQE…KDDK), and 8469-8484 (LKQE…KGDK). Positions 7876–8273 (KLKKEKDNKL…EADAKLKKDK (398 aa)) form a coiled coil. A coiled-coil region spans residues 8316-8490 (KLKKEKDNKL…KGDKLKLEDQ (175 aa)). Positions 8599-8611 (KHLKKKKKHHKKE) are enriched in basic residues. The tract at residues 8599–8626 (KHLKKKKKHHKKEKIAVKETEQDEKTVS) is disordered. The span at 8612–8626 (KIAVKETEQDEKTVS) shows a compositional bias: basic and acidic residues. The Fibronectin type-III 1 domain maps to 8950–9041 (KPRKAQLVAL…EIIEVNTLDY (92 aa)). 20 disordered regions span residues 9079–9104 (IEEH…LDSE), 9147–9436 (VQKI…AAAE), 9481–9609 (EEQS…ETES), 9702–10224 (ADAV…ESRI), 10239–10274 (ESDD…EDSP), 10539–11018 (QSAP…DSFT), 11030–11111 (EDAV…QKDQ), 11123–11213 (KKLA…QDKT), 11225–11387 (AKTT…SLTS), 11420–11592 (KGLN…NPEL), 11624–11825 (LTKK…SDNL), 11872–11955 (LSAH…TSLS), 11996–12054 (TNLI…LQKN), 12397–12418 (GRRV…RKKR), 12537–12974 (EESR…PAES), 13026–13045 (EAAK…TEVV), 13065–13261 (AAEA…LNDK), 13283–13514 (QAQA…EQLK), 13553–13574 (EEKQ…KLKL), and 13594–13874 (EKLA…RRTG). Positions 9084 to 9093 (KLKKKSKKSK) are enriched in basic residues. Composition is skewed to basic and acidic residues over residues 9172–9184 (VKKD…KKSL) and 9191–9202 (TKKEIQGKPEKK). Residues 9213–9231 (SSISETSETLTKDLTQTKQ) show a composition bias toward polar residues. Residues 9232-9267 (SEPEPAKRTTETSVQDEVKRKTETTSKSKQTTEEHP) show a composition bias toward basic and acidic residues. A compositionally biased stretch (low complexity) spans 9273–9283 (SDSSISSTSDA). Residues 9295 to 9332 (EAQKVTEKPETAKLESKSKMTEDTTKESDNKETVDEKP) show a composition bias toward basic and acidic residues. Residues 9346-9359 (STISETSETSAVES) show a composition bias toward low complexity. Residues 9371 to 9510 (AAVDKEKKQK…QTKAKAAEKQ (140 aa)) are a coiled coil. Composition is skewed to basic and acidic residues over residues 9373–9436 (VDKE…AAAE) and 9481–9521 (EEQS…KSNK). The span at 9547 to 9558 (SSISQKSDTSKT) shows a compositional bias: low complexity. A coiled-coil region spans residues 9577-9749 (TSKQKETDKK…QTVEEQAKLD (173 aa)). Composition is skewed to basic and acidic residues over residues 9578–9609 (SKQK…ETES) and 9702–9783 (ADAV…DEKP). Residues 9798–9809 (SISQKSVTSKTV) are compositionally biased toward polar residues. Composition is skewed to basic and acidic residues over residues 9819–10004 (ETQK…DEKP), 10040–10149 (ETQK…KSEN), and 10162–10196 (VKSE…EPKE). 2 coiled-coil regions span residues 9822-9995 (KVAD…TEEA) and 10046-10129 (EADK…TSKK). A compositionally biased stretch (basic residues) spans 10197–10206 (KKKIIKKKKD). Basic and acidic residues predominate over residues 10207-10224 (TTKPQEASKELSSDESRI). Residues 10239-10250 (ESDDLSTASTIK) are compositionally biased toward polar residues. Residues 10461 to 10553 (KPTSLQVTST…DTIEATTQAE (93 aa)) enclose the Fibronectin type-III 2 domain. Basic and acidic residues predominate over residues 10566–10609 (EKVKEPVSKKPENTKESEGHKKRDRKESEDHDENNLGKSGKDEF). The span at 10612–10637 (SGESGTSNQNEESAQLNTSFTSTEQH) shows a compositional bias: polar residues. Over residues 10663–10680 (IDADVVEVEYDEQGDDIP) the composition is skewed to acidic residues. Residues 10707–10716 (MAEKDSDAME) are compositionally biased toward basic and acidic residues. The span at 10779–10790 (ADQTGMSIQDLN) shows a compositional bias: polar residues. Basic and acidic residues-rich tracts occupy residues 10840–10852 (QLDK…DDKM) and 10863–10884 (KKPE…KESD). A compositionally biased stretch (polar residues) spans 10961 to 10975 (LSTSEQVENASQNLG). Composition is skewed to basic and acidic residues over residues 10999–11009 (IHGEAESKLGE), 11045–11055 (SAEKTSLEVRD), and 11076–11089 (SNRD…RDLN). Residues 11018–11064 (TLQDLYEELKAKEDAVEAGAETSNADQSAEKTSLEVRDMKKKMKKKQ) adopt a coiled-coil conformation. The span at 11090-11108 (TQHSNQTGEDESSTFNFGQ) shows a compositional bias: polar residues. Residues 11159–11173 (KKGEENEKTKFEAKH) are compositionally biased toward basic and acidic residues. Residues 11174–11187 (LGSSSASDSLAEST) are compositionally biased toward low complexity. Composition is skewed to basic and acidic residues over residues 11195-11211 (KGEV…KNQD), 11271-11280 (IPDKNRDSDK), and 11295-11318 (ESAE…EKTL). The span at 11374–11387 (SKVTTSFADESLTS) shows a compositional bias: polar residues. 2 stretches are compositionally biased toward basic and acidic residues: residues 11440–11464 (KVKD…KDQK) and 11472–11485 (GSKD…EEKT). Residues 11503 to 11515 (MTDQKNVQESQYA) show a composition bias toward polar residues. 3 stretches are compositionally biased toward basic and acidic residues: residues 11624–11635 (LTKKQDENDAKK), 11645–11669 (AKKD…DSRE), and 11722–11735 (VSEK…EKTV). Positions 11754–11767 (ESLNASSALSTTDV) are enriched in polar residues. Residues 11916–11937 (AEDKYVESRKKTTLKKKPEQKQ) are compositionally biased toward basic and acidic residues. A coiled-coil region spans residues 12408-12428 (ELDDAKKRKKRRIKRVVERRN). One can recognise an Ig-like 12 domain in the interval 12432–12547 (PRLTQLIPPR…ESRDDDKSVD (116 aa)). Basic and acidic residues-rich tracts occupy residues 12537 to 12547 (EESRDDDKSVD), 12555 to 12567 (LEEK…DKSK), and 12609 to 12689 (VGAK…KKDA). Over residues 12690–12701 (SQPSSSKESSPP) the composition is skewed to low complexity. A compositionally biased stretch (polar residues) spans 12729–12740 (TMHSETNITTTI). Basic and acidic residues-rich tracts occupy residues 12766–12839 (ESAK…KNKS), 12852–12865 (ETKK…EVPK), and 12889–12940 (PADD…DDKS). A coiled-coil region spans residues 12797 to 12828 (KKSEKKDEVTAEKQSTEALIESKKKEVDESKI). Residues 12980 to 13103 (AEVNKAKKQK…LKLEEESAAK (124 aa)) adopt a coiled-coil conformation. 7 stretches are compositionally biased toward basic and acidic residues: residues 13065-13124 (AAEA…KAGE), 13133-13145 (PTSK…KDVG), 13176-13191 (TDSE…DEPT), 13203-13261 (EADK…LNDK), 13283-13327 (QAQA…EKQA), 13337-13354 (AVKK…EANK), and 13361-13416 (LKIE…DEKP). Positions 13237 to 13380 (LDAQEKIKKV…SKQTVEEQAK (144 aa)) form a coiled coil. Over residues 13431–13442 (SISQKSETSKTV) the composition is skewed to polar residues. Positions 13452–13514 (ETQKVADAAR…KQKEKDEQLK (63 aa)) are enriched in basic and acidic residues. Residues 13455 to 13628 (KVADAARKQK…ETKSKQTEEA (174 aa)) adopt a coiled-coil conformation. Basic and acidic residues predominate over residues 13594–13637 (EKLAQEQSRLEDEAKKSAEKQKLESETKSKQTEEAPKESVDEKP). The segment covering 13651–13662 (SSISQKSKSAKS) has biased composition (low complexity). The segment covering 13684-13696 (KVEQSPDESTSAT) has biased composition (polar residues). Residues 13697–13735 (IKRDPAQKTEEISKQDDGDEKKTTTDGKPPKPEDSEATP) show a composition bias toward basic and acidic residues. Residues 13747–13760 (SDSVASDASLADVS) show a composition bias toward low complexity. The segment covering 13761-13770 (KLSDDVEEKP) has biased composition (basic and acidic residues). The segment covering 13784 to 13793 (SVISETSSVD) has biased composition (polar residues). Composition is skewed to basic and acidic residues over residues 13795-13808 (IKPE…EKAE) and 13824-13843 (SEPK…DMMT). The Ig-like 13 domain maps to 13963-14036 (PVDFVKYLPR…RAKYEDSGKY (74 aa)). 3 consecutive Fibronectin type-III domains span residues 14153 to 14247 (APGD…TGSP), 14253 to 14348 (VEFP…TVEG), and 14350 to 14448 (VPEI…VLAD). Ig-like domains follow at residues 14451–14542 (PRVL…VGIS), 14550–14634 (SSFS…VIVN), and 14638–14727 (PHIL…LVFE). A disulfide bond links Cys-14568 and Cys-14618. Fibronectin type-III domains lie at 14826-14920 (APCD…TLES) and 14937-15027 (ILRT…LVPG). A disordered region spans residues 15011-15180 (VSSPSEETNP…TGKETTEKKK (170 aa)). Basic and acidic residues-rich tracts occupy residues 15034–15060 (KTEK…EKQV) and 15085–15117 (KVAE…ESRR). The span at 15118-15132 (GSLQASSDNESVTTT) shows a compositional bias: polar residues. The span at 15133 to 15177 (SEKRSEAELEKNSEKSAEKKSTSADLEAADKAETEKSETGKETTE) shows a compositional bias: basic and acidic residues. 2 Ig-like domains span residues 15180–15274 (KKVV…VSIA) and 15283–15371 (PKVE…IALR). 2 Fibronectin type-III domains span residues 15383-15475 (PTGP…LKKK) and 15503-15596 (QIGK…TTES). The interval 15470-15503 (TTLKKKEETGKQKSEKSESDEKKSESDKVSELKQ) is disordered. The span at 15473-15503 (KKKEETGKQKSEKSESDEKKSESDKVSELKQ) shows a compositional bias: basic and acidic residues. Ig-like domains follow at residues 15599 to 15687 (PAFT…CKLT) and 15692 to 15786 (PEIN…IQVT). Residues 15791–15883 (APGKPAVEDQ…DESELVVVKN (93 aa)) enclose the Fibronectin type-III 10 domain. The Protein kinase domain occupies 15934–16189 (YIIHEELGKG…VQDALRHPWI (256 aa)). Residues 15940 to 15948 (LGKGAYGTV) and Lys-15963 each bind ATP. Catalysis depends on Asp-16055, which acts as the Proton acceptor. Residues 16206–16264 (KMQPKLDKSGVPARQKRNFLSLKRWSDDLLPIGRLAKRGAIFRRLTMDGVFERNIAFDT) form an autoinhibitory domain region. 4 consecutive Ig-like domains span residues 16268 to 16358 (PSVK…AKLS), 16500 to 16575 (GKQL…VAKN), 16605 to 16692 (PRFR…FSVV), and 16705 to 16789 (PKFL…KDFT). Cystine bridges form between Cys-16290–Cys-16342, Cys-16508–Cys-16571, Cys-16627–Cys-16677, and Cys-16726–Cys-16778. The tract at residues 16805-16827 (LTPVRSRSRSRSRSPSVVGGEIQ) is disordered. Ig-like domains are found at residues 16829–16918 (PPVV…AIVV), 16932–17025 (PTFV…LTIS), and 17037–17126 (PYFI…TEVS). The disordered stretch occupies residues 17121 to 17169 (QNTEVSVTKSKEVKEKKEKKKVEKKDEGKKKPGRPGLPRPSGASKTEQV). Residues 17129–17150 (KSKEVKEKKEKKKVEKKDEGKK) show a composition bias toward basic and acidic residues. One can recognise a Fibronectin type-III 11 domain in the interval 17154–17245 (RPGLPRPSGA…MTSTLKTASV (92 aa)). 11 consecutive Ig-like domains span residues 17249–17336 (PQFT…CQVT), 17358–17447 (PTLQ…CNVA), 17457–17548 (PSFS…VMIA), 17570–17661 (PRFT…TQVI), 17676–17765 (PKFT…QATT), 17782–17873 (PRFV…LNVS), 18008–18097 (PKFM…SEID), 18121–18213 (PNFI…LQVS), 18224–18316 (PPLF…MQLD), 18329–18417 (PRVF…LELT), and 18429–18519 (PKFN…MILS). 2 disulfides stabilise this stretch: Cys-17379–Cys-17431 and Cys-17478–Cys-17530. A disulfide bridge connects residues Cys-17697 and Cys-17754. Cys-18143 and Cys-18195 are oxidised to a cystine.

This sequence belongs to the protein kinase superfamily. CAMK Ser/Thr protein kinase family. Interacts (via C-terminus) with myosin. Interacts with actin. Requires Mg(2+) as cofactor. Expression is restricted to body wall, enteric and vulval muscles.

The protein resides in the cytoplasm. It localises to the myofibril. It is found in the sarcomere. Its subcellular location is the a band. The protein localises to the i band. The protein resides in the nucleus membrane. The catalysed reaction is L-seryl-[protein] + ATP = O-phospho-L-seryl-[protein] + ADP + H(+). It carries out the reaction L-threonyl-[protein] + ATP = O-phospho-L-threonyl-[protein] + ADP + H(+). Its function is as follows. Serine/threonine-protein kinase. Key component in the assembly and functioning of muscles. By providing connections at the level of individual microfilaments, it contributes to the fine balance of forces between the two halves of the sarcomere. The size and extensibility of the cross-links are the main determinants of sarcomere extensibility properties of muscle. In non-muscle cells, seems to play a role in chromosome condensation and chromosome segregation during mitosis. Might link the lamina network to chromatin or nuclear actin, or both during interphase. The protein is Titin homolog of Caenorhabditis elegans.